A 240-amino-acid polypeptide reads, in one-letter code: ATP synthase subunit a 1 (240 aa).

Transmembrane regions (helical) follow at residues 23–43, 82–102, 120–140, 186–206, and 207–227; these read GQVLITSWIVIGILVIVSVLA, VPFIGTLFLFIFVSNWSGALF, DINTTVALALCTSFVYFYAGF, LVVAVLVLLVPLIVPLPVMLL, and GLFTSGIQALVFATLAGAYIH.

The protein belongs to the ATPase A chain family. In terms of assembly, F-type ATPases have 2 components, CF(1) - the catalytic core - and CF(0) - the membrane proton channel. CF(1) has five subunits: alpha(3), beta(3), gamma(1), delta(1), epsilon(1). CF(0) has four main subunits: a, b, b' and c.

It is found in the cellular thylakoid membrane. In terms of biological role, key component of the proton channel; it plays a direct role in the translocation of protons across the membrane. The sequence is that of ATP synthase subunit a 1 from Acaryochloris marina (strain MBIC 11017).